Consider the following 612-residue polypeptide: Capsid protein (612 aa).

Residues 1–53 form a disordered region; that stretch reads MDANVQIRPARNNPSQGNQGRNNNNKRRRRRRGLKLPPVVAPITSPGQMAEPA. Over residues 11 to 23 the composition is skewed to low complexity; sequence RNNPSQGNQGRNN. The segment covering 24–34 has biased composition (basic residues); the sequence is NNKRRRRRRGL.

It belongs to the tetravirus capsid protein family.

Its subcellular location is the virion. In terms of biological role, self-assembles to form an icosahedral capsid with a T=4 symmetry, about 35 nm in diameter, and consisting of 240 copies of the two structural proteins. This chain is Capsid protein, found in Nudaurelia capensis beta virus (isolate Pine emperor moth/South Africa) (NbetaV).